The primary structure comprises 137 residues: Small ribosomal subunit protein uS12 (137 aa).

Position 102 is a 3-methylthioaspartic acid (Asp-102).

The protein belongs to the universal ribosomal protein uS12 family. In terms of assembly, part of the 30S ribosomal subunit. Contacts proteins S8 and S17. May interact with IF1 in the 30S initiation complex.

In terms of biological role, with S4 and S5 plays an important role in translational accuracy. Its function is as follows. Interacts with and stabilizes bases of the 16S rRNA that are involved in tRNA selection in the A site and with the mRNA backbone. Located at the interface of the 30S and 50S subunits, it traverses the body of the 30S subunit contacting proteins on the other side and probably holding the rRNA structure together. The combined cluster of proteins S8, S12 and S17 appears to hold together the shoulder and platform of the 30S subunit. The chain is Small ribosomal subunit protein uS12 from Phytoplasma mali (strain AT).